Reading from the N-terminus, the 379-residue chain is Chaperone protein DnaJ (379 aa).

The region spanning 5-70 (DYYEVLGVGK…EKKAAYDQYG (66 aa)) is the J domain. The CR-type zinc finger occupies 139 to 217 (GHEAQIRVPH…CHGQGKLKSQ (79 aa)). 8 residues coordinate Zn(2+): C152, C155, C169, C172, C191, C194, C205, and C208. CXXCXGXG motif repeat units follow at residues 152–159 (CDHCHGNG), 169–176 (CPTCHGAG), 191–198 (CPKCHGSG), and 205–212 (CTKCHGQG). Residues 356 to 379 (VHEGGSRHSPQEQSWLDKVKSFFS) form a disordered region.

The protein belongs to the DnaJ family. Homodimer. Requires Zn(2+) as cofactor.

It localises to the cytoplasm. Its function is as follows. Participates actively in the response to hyperosmotic and heat shock by preventing the aggregation of stress-denatured proteins and by disaggregating proteins, also in an autonomous, DnaK-independent fashion. Unfolded proteins bind initially to DnaJ; upon interaction with the DnaJ-bound protein, DnaK hydrolyzes its bound ATP, resulting in the formation of a stable complex. GrpE releases ADP from DnaK; ATP binding to DnaK triggers the release of the substrate protein, thus completing the reaction cycle. Several rounds of ATP-dependent interactions between DnaJ, DnaK and GrpE are required for fully efficient folding. Also involved, together with DnaK and GrpE, in the DNA replication of plasmids through activation of initiation proteins. The polypeptide is Chaperone protein DnaJ (Cupriavidus pinatubonensis (strain JMP 134 / LMG 1197) (Cupriavidus necator (strain JMP 134))).